The sequence spans 90 residues: UPF0335 protein R02793 (90 aa).

It belongs to the UPF0335 family.

The sequence is that of UPF0335 protein R02793 from Rhizobium meliloti (strain 1021) (Ensifer meliloti).